A 593-amino-acid chain; its full sequence is V-type ATP synthase alpha chain (593 aa).

An ATP-binding site is contributed by 246–253; it reads GPFGAGKT.

It belongs to the ATPase alpha/beta chains family.

The enzyme catalyses ATP + H2O + 4 H(+)(in) = ADP + phosphate + 5 H(+)(out). Produces ATP from ADP in the presence of a proton gradient across the membrane. The V-type alpha chain is a catalytic subunit. In Protochlamydia amoebophila (strain UWE25), this protein is V-type ATP synthase alpha chain.